Here is a 455-residue protein sequence, read N- to C-terminus: D-arabinitol 4-dehydrogenase (455 aa).

The protein belongs to the mannitol dehydrogenase family. Monomer.

It carries out the reaction D-arabinitol + NAD(+) = D-xylulose + NADH + H(+). It functions in the pathway carbohydrate metabolism; D-arabinitol metabolism. The chain is D-arabinitol 4-dehydrogenase (dalD) from Klebsiella pneumoniae.